We begin with the raw amino-acid sequence, 393 residues long: Sedoheptulose-1,7-bisphosphatase, chloroplastic (393 aa).

Residues C115 and C120 are joined by a disulfide bond. Mg(2+) contacts are provided by D126, E155, D176, L178, and D179. Residues 179-182 (DGSS), Y290, and K320 each bind substrate. E326 contributes to the Mg(2+) binding site.

Belongs to the FBPase class 1 family. As to quaternary structure, homodimer. Mg(2+) serves as cofactor.

Its subcellular location is the plastid. It is found in the chloroplast. It catalyses the reaction D-sedoheptulose 1,7-bisphosphate + H2O = D-sedoheptulose 7-phosphate + phosphate. The protein operates within carbohydrate biosynthesis; Calvin cycle. The protein is Sedoheptulose-1,7-bisphosphatase, chloroplastic of Triticum aestivum (Wheat).